The chain runs to 428 residues: Secernin-2 (428 aa).

Residue Cys10 is part of the active site.

Belongs to the peptidase C69 family. Secernin subfamily.

The sequence is that of Secernin-2 (scrn2) from Xenopus laevis (African clawed frog).